The following is a 502-amino-acid chain: ATP synthase subunit alpha (502 aa).

ATP is bound at residue 169 to 176; the sequence is GDRQTGKT.

It belongs to the ATPase alpha/beta chains family. F-type ATPases have 2 components, CF(1) - the catalytic core - and CF(0) - the membrane proton channel. CF(1) has five subunits: alpha(3), beta(3), gamma(1), delta(1), epsilon(1). CF(0) has three main subunits: a(1), b(2) and c(9-12). The alpha and beta chains form an alternating ring which encloses part of the gamma chain. CF(1) is attached to CF(0) by a central stalk formed by the gamma and epsilon chains, while a peripheral stalk is formed by the delta and b chains.

The protein resides in the cell inner membrane. The catalysed reaction is ATP + H2O + 4 H(+)(in) = ADP + phosphate + 5 H(+)(out). In terms of biological role, produces ATP from ADP in the presence of a proton gradient across the membrane. The alpha chain is a regulatory subunit. The polypeptide is ATP synthase subunit alpha (Oleidesulfovibrio alaskensis (strain ATCC BAA-1058 / DSM 17464 / G20) (Desulfovibrio alaskensis)).